Consider the following 670-residue polypeptide: NAD-dependent histone deacetylase SIR2 (670 aa).

Disordered stretches follow at residues M1–I157 and D235–S263. Residues N45–E68 show a composition bias toward acidic residues. Residues D69–D81 show a composition bias toward basic and acidic residues. Positions E82–E92 are enriched in acidic residues. The segment covering S96–L119 has biased composition (polar residues). Residues A120–T142 show a composition bias toward low complexity. The segment covering S239–S261 has biased composition (polar residues). A Deacetylase sirtuin-type domain is found at R293–D583. NAD(+) contacts are provided by residues G318–Y337 and Q400–D403. Residue H420 is the Proton acceptor of the active site. Zn(2+) contacts are provided by C428, C431, C452, and C455. Residues G527 to S529, N552 to D554, and C569 contribute to the NAD(+) site. The interval A617–T670 is disordered. Low complexity predominate over residues S641–S654. Polar residues predominate over residues T659–T670.

The protein belongs to the sirtuin family. Class I subfamily. Zn(2+) serves as cofactor.

The protein resides in the nucleus. It carries out the reaction N(6)-acetyl-L-lysyl-[protein] + NAD(+) + H2O = 2''-O-acetyl-ADP-D-ribose + nicotinamide + L-lysyl-[protein]. Its function is as follows. NAD-dependent deacetylase, which asts as a key regulator of gene expression believed to help form modified chromatin structures on the genes it regulates. It is involved in telomeric silencing and in hm mating type loci silencing. The polypeptide is NAD-dependent histone deacetylase SIR2 (SIR2) (Kluyveromyces lactis (strain ATCC 8585 / CBS 2359 / DSM 70799 / NBRC 1267 / NRRL Y-1140 / WM37) (Yeast)).